Reading from the N-terminus, the 316-residue chain is tRNA-splicing endonuclease subunit Sen34 (316 aa).

Residues 120 to 184 (QAAKKQKLEQ…PGPSNGVTPL (65 aa)) are disordered. 2 stretches are compositionally biased toward polar residues: residues 144-159 (EATQ…QPSA) and 168-181 (LDSS…SNGV). Residues Tyr-253, His-261, and Lys-292 contribute to the active site.

This sequence belongs to the tRNA-intron endonuclease family. TRNA splicing endonuclease is a heterotetramer composed of TSEN2, TSEN15, TSEN34/LENG5 and TSEN54. tRNA splicing endonuclease complex also contains proteins of the pre-mRNA 3'-end processing machinery such as CLP1, CPSF1, CPSF4 and CSTF2.

The protein resides in the nucleus. It localises to the nucleolus. It catalyses the reaction pretRNA = a 3'-half-tRNA molecule with a 5'-OH end + a 5'-half-tRNA molecule with a 2',3'-cyclic phosphate end + an intron with a 2',3'-cyclic phosphate and a 5'-hydroxyl terminus.. Functionally, constitutes one of the two catalytic subunit of the tRNA-splicing endonuclease complex, a complex responsible for identification and cleavage of the splice sites in pre-tRNA. It cleaves pre-tRNA at the 5'- and 3'-splice sites to release the intron. The products are an intron and two tRNA half-molecules bearing 2',3'-cyclic phosphate and 5'-OH termini. There are no conserved sequences at the splice sites, but the intron is invariably located at the same site in the gene, placing the splice sites an invariant distance from the constant structural features of the tRNA body. The tRNA splicing endonuclease is also involved in mRNA processing via its association with pre-mRNA 3'-end processing factors, establishing a link between pre-tRNA splicing and pre-mRNA 3'-end formation, suggesting that the endonuclease subunits function in multiple RNA-processing events. The chain is tRNA-splicing endonuclease subunit Sen34 (Tsen34) from Mus musculus (Mouse).